Reading from the N-terminus, the 233-residue chain is MLTYENWQEPSITFQEDDLYKGALSVLKWAYGHYGDQLVYACSFGIEGIVLIDLIAKVKKDARIVFLDTGLHFKETYDTIDAVKERYPGLDIVLKTPELTVEEQNDQHGDQLWKTDPQSCCHMRKVIPLQEALSGYPAWLSGLRREQSPKRAGTNFLNKDEKFKSVKVCPLIHWTWKDIWRYASREELTYNPLHDQGYPSIGCAPCTQPAFTAQDLRSGRWSGTAKTECGLHE.

Positions 120, 121, 203, and 206 each coordinate [4Fe-4S] cluster. The active-site Nucleophile; cysteine thiosulfonate intermediate is the C229.

This sequence belongs to the PAPS reductase family. CysH subfamily. [4Fe-4S] cluster is required as a cofactor.

The protein localises to the cytoplasm. The catalysed reaction is [thioredoxin]-disulfide + sulfite + AMP + 2 H(+) = adenosine 5'-phosphosulfate + [thioredoxin]-dithiol. It participates in sulfur metabolism; hydrogen sulfide biosynthesis; sulfite from sulfate. Catalyzes the formation of sulfite from adenosine 5'-phosphosulfate (APS) using thioredoxin as an electron donor. The chain is Adenosine 5'-phosphosulfate reductase from Bacillus pumilus (strain SAFR-032).